Consider the following 87-residue polypeptide: Large ribosomal subunit protein bL27c (87 aa).

The segment at 1 to 20 is disordered; that stretch reads MAHKKGSGSTKNGRDSRSQR.

Belongs to the bacterial ribosomal protein bL27 family.

The protein resides in the plastid. Its subcellular location is the chloroplast. This chain is Large ribosomal subunit protein bL27c, found in Gracilaria tenuistipitata var. liui (Red alga).